The chain runs to 296 residues: Pre-mRNA-splicing factor CWC23 (296 aa).

A J domain is found at 14-86; it reads DLYKLLELNY…AKKAEYDQWV (73 aa).

It belongs to the DnaJ family. In terms of assembly, associated with the spliceosome.

It localises to the cytoplasm. Its subcellular location is the nucleus. In terms of biological role, involved in pre-mRNA splicing. May be involved in endoplasmic reticulum-associated protein degradation (ERAD) and required for growth at low and high temperatures. This Candida glabrata (strain ATCC 2001 / BCRC 20586 / JCM 3761 / NBRC 0622 / NRRL Y-65 / CBS 138) (Yeast) protein is Pre-mRNA-splicing factor CWC23 (CWC23).